A 1495-amino-acid polypeptide reads, in one-letter code: VPS10 homolog 2 (1495 aa).

The first 21 residues, 1–21, serve as a signal peptide directing secretion; sequence MALFRALYIIWVFLLIPLFNA. Residues 23–1369 lie on the Lumenal side of the membrane; sequence EFTPKVTRTL…AFREKYPINT (1347 aa). 2 BNR repeats span residues 58–67 and 101–111; these read ISFDAGENWK and YVTDDQGKSWR. N-linked (GlcNAc...) asparagine glycosylation is present at Asn148. BNR repeat units follow at residues 229-238, 394-403, and 465-475; these read LSADGGETFK, VSVDNGLTWS, and FISRDSGLTWR. N-linked (GlcNAc...) asparagine glycosylation occurs at Asn479. BNR repeat units lie at residues 511–520 and 740–750; these read YYSLDQGKTW and YISHDGGQTIK. Asn769 is a glycosylation site (N-linked (GlcNAc...) asparagine). One copy of the BNR 8 repeat lies at 837–847; sequence YLTKDGGETFT. Asn986 is a glycosylation site (N-linked (GlcNAc...) asparagine). BNR repeat units follow at residues 1119-1129 and 1161-1170; these read FLTTDGGETWT and YSTDFGKTWK. Residue Asn1279 is glycosylated (N-linked (GlcNAc...) asparagine). A helical transmembrane segment spans residues 1370-1390; the sequence is GAYALVFVTILLVIFFAAWFV. At 1391-1495 the chain is on the cytoplasmic side; the sequence is YDRGIRRNGG…GTAQLSCFKI (105 aa).

This sequence belongs to the VPS10-related sortilin family.

The protein localises to the golgi apparatus. Its subcellular location is the trans-Golgi network membrane. Its function is as follows. Functions as a sorting receptor in the Golgi compartment required for the intracellular sorting and delivery of soluble vacuolar proteins, like carboxypeptidase Y (CPY) and proteinase A. The chain is VPS10 homolog 2 (VTH2) from Saccharomyces cerevisiae (strain Lalvin EC1118 / Prise de mousse) (Baker's yeast).